The following is a 410-amino-acid chain: MVLSQRQRDELNRAIADYLRSNGYEEAYSTFKKEAELDMNEELDKKYAGLLEKKWTSVIRLQKKVMELESKLNEAKEEITLGGPIAQKRDPKEWIPRPPEKYALSGHRSPVTRVIFHPVFSVMVSASEDATIKVWDYETGDFERTLKGHTDSVQDISFDHTGKLLASCSADMTIKLWDFQGFECIRTMHGHDHNVSSVAIMPNGDHIVSASRDKTIKMWEVATGYCVKTFTGHREWVRMVRPNQDGTLIASCSNDQTVRVWVVASKECKAELREHEHVVECISWAPESAHPTILEATGSESKKSGKPGPFLLSGSRDKTIKMWDVSIGMCLMTLVGHDNWVRGMLVHPGGKFILSCADDKTLRIWDYKNKRCMKTLGAHEHFVTSLDFHKNAPYVVTGSVDQTVKVWECR.

The LisH domain maps to 7–39 (QRDELNRAIADYLRSNGYEEAYSTFKKEAELDM). Residues 56–82 (TSVIRLQKKVMELESKLNEAKEEITLG) adopt a coiled-coil conformation. 7 WD repeats span residues 106 to 147 (GHRS…RTLK), 148 to 187 (GHTDSVQDISFDHTGKLLASCSADMTIKLWDFQGFECIRT), 190 to 229 (GHDHNVSSVAIMPNGDHIVSASRDKTIKMWEVATGYCVKT), 232 to 271 (GHREWVRMVRPNQDGTLIASCSNDQTVRVWVVASKECKAE), 274 to 333 (EHEH…CLMT), 336 to 375 (GHDNWVRGMLVHPGGKFILSCADDKTLRIWDYKNKRCMKT), and 378 to 410 (AHEHFVTSLDFHKNAPYVVTGSVDQTVKVWECR).

Belongs to the WD repeat LIS1/nudF family. As to quaternary structure, can self-associate. Component of the cytosolic PAF-AH (I) heterotetrameric enzyme, which is composed of PAFAH1B1 (beta), PAFAH1B2 (alpha2) and PAFAH1B3 (alpha1) subunits. The catalytic activity of the enzyme resides in the alpha1 (PAFAH1B3) and alpha2 (PAFAH1B2) subunits, whereas the beta subunit (PAFAH1B1) has regulatory activity. Trimer formation is not essential for the catalytic activity. Interacts with dynein, dynactin, nde1 and ndel1.

It is found in the cytoplasm. The protein localises to the cytoskeleton. It localises to the microtubule organizing center. Its subcellular location is the centrosome. Functionally, regulatory subunit (beta subunit) of the cytosolic type I platelet-activating factor (PAF) acetylhydrolase (PAF-AH (I)), an enzyme that catalyzes the hydrolyze of the acetyl group at the sn-2 position of PAF and its analogs and participates in PAF inactivation. Regulates the PAF-AH (I) activity in a catalytic dimer composition-dependent manner. Positively regulates the activity of the minus-end directed microtubule motor protein dynein. May enhance dynein-mediated microtubule sliding by targeting dynein to the microtubule plus end. Required for several dynein- and microtubule-dependent processes such as the maintenance of Golgi integrity, the peripheral transport of microtubule fragments and the coupling of the nucleus and centrosome. May be required for proliferation of neuronal precursors and neuronal migration. In Salmo salar (Atlantic salmon), this protein is Lissencephaly-1 homolog A (pafah1b1-1).